The primary structure comprises 267 residues: NAD kinase (267 aa).

Catalysis depends on Asp52, which acts as the Proton acceptor. NAD(+) contacts are provided by residues 52–53 (DG), Arg57, 121–122 (NE), Arg132, Lys150, Asp152, 163–168 (TAYSLS), and Ala187.

The protein belongs to the NAD kinase family. It depends on a divalent metal cation as a cofactor.

It localises to the cytoplasm. The enzyme catalyses NAD(+) + ATP = ADP + NADP(+) + H(+). In terms of biological role, involved in the regulation of the intracellular balance of NAD and NADP, and is a key enzyme in the biosynthesis of NADP. Catalyzes specifically the phosphorylation on 2'-hydroxyl of the adenosine moiety of NAD to yield NADP. In Fusobacterium nucleatum subsp. nucleatum (strain ATCC 25586 / DSM 15643 / BCRC 10681 / CIP 101130 / JCM 8532 / KCTC 2640 / LMG 13131 / VPI 4355), this protein is NAD kinase.